We begin with the raw amino-acid sequence, 189 residues long: Elongation factor P (189 aa).

The protein belongs to the elongation factor P family.

The protein localises to the cytoplasm. The protein operates within protein biosynthesis; polypeptide chain elongation. Its function is as follows. Involved in peptide bond synthesis. Stimulates efficient translation and peptide-bond synthesis on native or reconstituted 70S ribosomes in vitro. Probably functions indirectly by altering the affinity of the ribosome for aminoacyl-tRNA, thus increasing their reactivity as acceptors for peptidyl transferase. This Campylobacter fetus subsp. fetus (strain 82-40) protein is Elongation factor P.